The following is a 118-amino-acid chain: Deoxynogalonate monooxygenase (118 aa).

The ABM domain maps to Val14–Phe100.

In terms of assembly, homodimer.

It carries out the reaction deoxynogalonate + O2 = nogalonate + H2O + H(+). The protein operates within antibiotic biosynthesis. Functionally, involved in the biosynthesis of the anthracycline (aromatic polyketide) antibiotic nogalamycin. Catalyzes the oxygenation of 12-deoxy-nogalonic acid at position 12 to yield nogalonic acid. The polypeptide is Deoxynogalonate monooxygenase (Streptomyces nogalater).